The chain runs to 152 residues: Large ribosomal subunit protein uL30 (152 aa).

It belongs to the universal ribosomal protein uL30 family. In terms of assembly, part of the 50S ribosomal subunit.

The polypeptide is Large ribosomal subunit protein uL30 (Methanobrevibacter smithii (strain ATCC 35061 / DSM 861 / OCM 144 / PS)).